The primary structure comprises 524 residues: Methyl-CpG-binding domain-containing protein 8 (524 aa).

Residues 45-60 (CSSLSPSSSASLAASA) are compositionally biased toward low complexity. A disordered region spans residues 45–151 (CSSLSPSSSA…EEELEDNEGQ (107 aa)). Over residues 75–84 (FNESAGSRKQ) the composition is skewed to polar residues. Residues 106-116 (RQRDDSSREEQ) show a composition bias toward basic and acidic residues. Over residues 136–149 (EEEDEGEEELEDNE) the composition is skewed to acidic residues. Residues 334–406 (VVNACDYGGY…QHYYLQSDNK (73 aa)) form the MBD domain.

Expressed in shoot meristems, roots (vasculature and tips), hypocotyls (vasculature), cotyledons (vasculature and hydathodes), young leaves, buds, flowers and stems. Detected in stomata.

It localises to the nucleus. Functionally, probable transcriptional regulator. May regulates developmental traits such as flowering time. This chain is Methyl-CpG-binding domain-containing protein 8 (MBD8), found in Arabidopsis thaliana (Mouse-ear cress).